Here is a 200-residue protein sequence, read N- to C-terminus: Putative 3-methyladenine DNA glycosylase (200 aa).

This sequence belongs to the DNA glycosylase MPG family.

The sequence is that of Putative 3-methyladenine DNA glycosylase from Shouchella clausii (strain KSM-K16) (Alkalihalobacillus clausii).